A 609-amino-acid polypeptide reads, in one-letter code: Sulfite reductase [NADPH] flavoprotein alpha-component (609 aa).

A Flavodoxin-like domain is found at 72-210; sequence ITLISASQTG…LAAQWRRQLV (139 aa). FMN is bound by residues 78–83 and 125–128; these read SQTGNA and STQG. An FAD-binding FR-type domain is found at 244 to 458; the sequence is SSPLQATFAV…IEHNDNFRLP (215 aa). FAD-binding positions include Thr-332, Gln-366, 396 to 399, 414 to 416, Tyr-420, and 429 to 432; these read RLYS, TVG, and GGAS. NADP(+) contacts are provided by residues 529–530, 535–539, and Asp-571; these read SR and KIYVQ. FAD is bound at residue Tyr-609.

This sequence belongs to the NADPH-dependent sulphite reductase flavoprotein subunit CysJ family. In the N-terminal section; belongs to the flavodoxin family. It in the C-terminal section; belongs to the flavoprotein pyridine nucleotide cytochrome reductase family. As to quaternary structure, alpha(8)-beta(8). The alpha component is a flavoprotein, the beta component is a hemoprotein. FAD serves as cofactor. It depends on FMN as a cofactor.

It catalyses the reaction hydrogen sulfide + 3 NADP(+) + 3 H2O = sulfite + 3 NADPH + 4 H(+). The protein operates within sulfur metabolism; hydrogen sulfide biosynthesis; hydrogen sulfide from sulfite (NADPH route): step 1/1. Its function is as follows. Component of the sulfite reductase complex that catalyzes the 6-electron reduction of sulfite to sulfide. This is one of several activities required for the biosynthesis of L-cysteine from sulfate. The flavoprotein component catalyzes the electron flow from NADPH -&gt; FAD -&gt; FMN to the hemoprotein component. The sequence is that of Sulfite reductase [NADPH] flavoprotein alpha-component from Pectobacterium atrosepticum (strain SCRI 1043 / ATCC BAA-672) (Erwinia carotovora subsp. atroseptica).